A 732-amino-acid chain; its full sequence is Formin-homology and zinc finger domains protein 1 (732 aa).

Composition is skewed to low complexity over residues M1–S12, Q19–S45, Q121–S137, and S240–P251. A signal peptide spans M1–A27. 3 disordered regions span residues M1–S45, Q121–K141, and R232–T267. The segment covering S256–T267 has biased composition (polar residues). The region spanning P355–P732 is the FH2 domain.

It belongs to the formin homology family. In terms of tissue distribution, transiently expressed in all mesoderm derived progenitor body wall muscle cells before they differentiate.

Its function is as follows. Acts redundantly with hlh-1 to promote body wall muscle cell and coelomocyte specification in postembryonic mesoderm progenitors, probably through suppression of sem-2. The sequence is that of Formin-homology and zinc finger domains protein 1 from Caenorhabditis elegans.